Consider the following 283-residue polypeptide: Formamidopyrimidine-DNA glycosylase (283 aa).

P2 acts as the Schiff-base intermediate with DNA in catalysis. The active-site Proton donor is E3. The active-site Proton donor; for beta-elimination activity is K58. Positions 100, 119, and 162 each coordinate DNA. Residues D247 to R283 form an FPG-type zinc finger. Residue R273 is the Proton donor; for delta-elimination activity of the active site.

This sequence belongs to the FPG family. As to quaternary structure, monomer. Requires Zn(2+) as cofactor.

It catalyses the reaction Hydrolysis of DNA containing ring-opened 7-methylguanine residues, releasing 2,6-diamino-4-hydroxy-5-(N-methyl)formamidopyrimidine.. It carries out the reaction 2'-deoxyribonucleotide-(2'-deoxyribose 5'-phosphate)-2'-deoxyribonucleotide-DNA = a 3'-end 2'-deoxyribonucleotide-(2,3-dehydro-2,3-deoxyribose 5'-phosphate)-DNA + a 5'-end 5'-phospho-2'-deoxyribonucleoside-DNA + H(+). Involved in base excision repair of DNA damaged by oxidation or by mutagenic agents. Acts as a DNA glycosylase that recognizes and removes damaged bases. Has a preference for oxidized purines, such as 7,8-dihydro-8-oxoguanine (8-oxoG). Has AP (apurinic/apyrimidinic) lyase activity and introduces nicks in the DNA strand. Cleaves the DNA backbone by beta-delta elimination to generate a single-strand break at the site of the removed base with both 3'- and 5'-phosphates. This chain is Formamidopyrimidine-DNA glycosylase, found in Ruegeria pomeroyi (strain ATCC 700808 / DSM 15171 / DSS-3) (Silicibacter pomeroyi).